The primary structure comprises 907 residues: Protein translocase subunit SecA (907 aa).

ATP is bound by residues Gln-87, 105–109, and Asp-513; that span reads GEGKT. Residues 841–853 show a composition bias toward basic and acidic residues; sequence EAQRRAQAEEAAR. The disordered stretch occupies residues 841–907; it reads EAQRRAQAEE…KYKQCHGQIN (67 aa). A compositionally biased stretch (low complexity) spans 854–865; that stretch reads RAQAQHASAQSQ. A compositionally biased stretch (basic and acidic residues) spans 872-887; that stretch reads EGHHQPVVRDERKVGR. The Zn(2+) site is built by Cys-891, Cys-893, Cys-902, and His-903.

It belongs to the SecA family. In terms of assembly, monomer and homodimer. Part of the essential Sec protein translocation apparatus which comprises SecA, SecYEG and auxiliary proteins SecDF-YajC and YidC. Requires Zn(2+) as cofactor.

It is found in the cell inner membrane. The protein resides in the cytoplasm. The catalysed reaction is ATP + H2O + cellular proteinSide 1 = ADP + phosphate + cellular proteinSide 2.. In terms of biological role, part of the Sec protein translocase complex. Interacts with the SecYEG preprotein conducting channel. Has a central role in coupling the hydrolysis of ATP to the transfer of proteins into and across the cell membrane, serving both as a receptor for the preprotein-SecB complex and as an ATP-driven molecular motor driving the stepwise translocation of polypeptide chains across the membrane. The protein is Protein translocase subunit SecA of Vibrio vulnificus (strain YJ016).